The following is a 378-amino-acid chain: tRNA (guanine(37)-N(1))-methyltransferase (378 aa).

Residues His-196, 234–235 (DL), 262–263 (DA), and Asn-282 each bind S-adenosyl-L-methionine.

It belongs to the class I-like SAM-binding methyltransferase superfamily. TRM5/TYW2 family. Monomer.

The protein resides in the mitochondrion matrix. Its subcellular location is the nucleus. The protein localises to the cytoplasm. The enzyme catalyses guanosine(37) in tRNA + S-adenosyl-L-methionine = N(1)-methylguanosine(37) in tRNA + S-adenosyl-L-homocysteine + H(+). Specifically methylates the N1 position of guanosine-37 in various cytoplasmic and mitochondrial tRNAs. Methylation is not dependent on the nature of the nucleoside 5' of the target nucleoside. This is the first step in the biosynthesis of wybutosine (yW), a modified base adjacent to the anticodon of tRNAs and required for accurate decoding. This is tRNA (guanine(37)-N(1))-methyltransferase from Trichomonas vaginalis (strain ATCC PRA-98 / G3).